A 130-amino-acid chain; its full sequence is Small ribosomal subunit protein uS9 (130 aa).

This sequence belongs to the universal ribosomal protein uS9 family.

This chain is Small ribosomal subunit protein uS9, found in Pasteurella multocida (strain Pm70).